Consider the following 331-residue polypeptide: L-lactate dehydrogenase A chain (331 aa).

Residues 29-57 (GMVG…MEDK) and arginine 98 each bind NAD(+). Residues arginine 105, asparagine 137, and arginine 168 each contribute to the substrate site. Position 137 (asparagine 137) interacts with NAD(+). Histidine 192 functions as the Proton acceptor in the catalytic mechanism. Threonine 247 contributes to the substrate binding site.

This sequence belongs to the LDH/MDH superfamily. LDH family. In terms of assembly, homotetramer.

It is found in the cytoplasm. It catalyses the reaction (S)-lactate + NAD(+) = pyruvate + NADH + H(+). Its pathway is fermentation; pyruvate fermentation to lactate; (S)-lactate from pyruvate: step 1/1. Its function is as follows. Interconverts simultaneously and stereospecifically pyruvate and lactate with concomitant interconversion of NADH and NAD(+). The polypeptide is L-lactate dehydrogenase A chain (ldha) (Dissostichus eleginoides (Patagonian toothfish)).